The following is a 206-amino-acid chain: Proteasome subunit beta 1 (206 aa).

A propeptide spans 1-14 (removed in mature form; by autocatalysis); sequence MSRIHNDPKVLLTG. The active-site Nucleophile is the Thr-15.

This sequence belongs to the peptidase T1B family. As to quaternary structure, the 20S proteasome core is composed of 14 alpha and 14 beta subunits that assemble into four stacked heptameric rings, resulting in a barrel-shaped structure. The two inner rings, each composed of seven catalytic beta subunits, are sandwiched by two outer rings, each composed of seven alpha subunits. The catalytic chamber with the active sites is on the inside of the barrel. Has a gated structure, the ends of the cylinder being occluded by the N-termini of the alpha-subunits. Is capped at one or both ends by the proteasome regulatory ATPase, PAN.

It is found in the cytoplasm. It catalyses the reaction Cleavage of peptide bonds with very broad specificity.. Its activity is regulated as follows. The formation of the proteasomal ATPase PAN-20S proteasome complex, via the docking of the C-termini of PAN into the intersubunit pockets in the alpha-rings, triggers opening of the gate for substrate entry. Interconversion between the open-gate and close-gate conformations leads to a dynamic regulation of the 20S proteasome proteolysis activity. Component of the proteasome core, a large protease complex with broad specificity involved in protein degradation. The chain is Proteasome subunit beta 1 from Caldivirga maquilingensis (strain ATCC 700844 / DSM 13496 / JCM 10307 / IC-167).